A 300-amino-acid polypeptide reads, in one-letter code: Dipeptide transport system permease protein DppC (300 aa).

Topologically, residues 1–31 are cytoplasmic; sequence MSQVTENKVISAPVPMTPLQEFWHYFKRNKG. The helical transmembrane segment at 32–52 threads the bilayer; that stretch reads AVVGLVYVVIVLFIAIFANWI. The Periplasmic portion of the chain corresponds to 53–101; that stretch reads APYNPAEQFRDALLAPPAWQEGGSMAHLLGTDDVGRDVLSRLMYGARLS. The region spanning 98–287 is the ABC transmembrane type-1 domain; that stretch reads ARLSLLVGCL…LTVLAFNLMG (190 aa). The chain crosses the membrane as a helical span at residues 102–122; that stretch reads LLVGCLVVVLSLIMGVILGLI. The Cytoplasmic segment spans residues 123-136; the sequence is AGYFGGLVDNIIMR. A helical transmembrane segment spans residues 137–157; the sequence is VVDIMLALPSLLLALVLVAIF. The Periplasmic portion of the chain corresponds to 158-206; that stretch reads GPSIGNAALALTFVALPHYVRLTRAAVLVEVNRDYVTASRVAGAGAMRQ. The helical transmembrane segment at 207-227 threads the bilayer; the sequence is MFINIFPNCLAPLIVQASLGF. At 228–230 the chain is on the cytoplasmic side; the sequence is SNA. A helical transmembrane segment spans residues 231–251; that stretch reads ILDMAALGFLGMGAQPPTPEW. Residues 252-265 are Periplasmic-facing; sequence GTMLSDVLQFAQSA. A helical membrane pass occupies residues 266–286; it reads WWVVTFPGLAILLTVLAFNLM. The Cytoplasmic portion of the chain corresponds to 287-300; sequence GDGLRDALDPKLKQ.

It belongs to the binding-protein-dependent transport system permease family. OppBC subfamily. As to quaternary structure, the complex is composed of two ATP-binding proteins (DppD and DppF), two transmembrane proteins (DppB and DppC) and a solute-binding protein (DppA).

The protein resides in the cell inner membrane. In terms of biological role, part of the ABC transporter DppABCDF involved in dipeptide transport. Responsible for the translocation of the substrate across the membrane. The chain is Dipeptide transport system permease protein DppC (dppC) from Escherichia coli O157:H7.